A 155-amino-acid chain; its full sequence is Ribosome maturation factor RimP (155 aa).

The protein belongs to the RimP family.

It localises to the cytoplasm. Required for maturation of 30S ribosomal subunits. The polypeptide is Ribosome maturation factor RimP (Gemmatimonas aurantiaca (strain DSM 14586 / JCM 11422 / NBRC 100505 / T-27)).